The sequence spans 430 residues: Enolase (430 aa).

(2R)-2-phosphoglycerate is bound at residue Q167. The Proton donor role is filled by E209. D245, E286, and D313 together coordinate Mg(2+). K338, R367, S368, and K389 together coordinate (2R)-2-phosphoglycerate. The active-site Proton acceptor is the K338.

Belongs to the enolase family. Requires Mg(2+) as cofactor.

Its subcellular location is the cytoplasm. It is found in the secreted. The protein resides in the cell surface. It catalyses the reaction (2R)-2-phosphoglycerate = phosphoenolpyruvate + H2O. The protein operates within carbohydrate degradation; glycolysis; pyruvate from D-glyceraldehyde 3-phosphate: step 4/5. In terms of biological role, catalyzes the reversible conversion of 2-phosphoglycerate (2-PG) into phosphoenolpyruvate (PEP). It is essential for the degradation of carbohydrates via glycolysis. This chain is Enolase, found in Parasynechococcus marenigrum (strain WH8102).